A 232-amino-acid chain; its full sequence is Large ribosomal subunit protein uL1 (232 aa).

This sequence belongs to the universal ribosomal protein uL1 family. As to quaternary structure, part of the 50S ribosomal subunit.

Its function is as follows. Binds directly to 23S rRNA. The L1 stalk is quite mobile in the ribosome, and is involved in E site tRNA release. Protein L1 is also a translational repressor protein, it controls the translation of the L11 operon by binding to its mRNA. In Azobacteroides pseudotrichonymphae genomovar. CFP2, this protein is Large ribosomal subunit protein uL1.